Reading from the N-terminus, the 645-residue chain is Translation factor GUF1 homolog, mitochondrial (645 aa).

Residues 40–215 enclose the tr-type G domain; the sequence is DKIRNFGIVA…AIIDRVPAPT (176 aa). GTP is bound by residues 49 to 56, 108 to 112, and 162 to 165; these read AHVDHGKS, DTPGH, and NKID.

The protein belongs to the TRAFAC class translation factor GTPase superfamily. Classic translation factor GTPase family. LepA subfamily.

The protein localises to the mitochondrion inner membrane. It carries out the reaction GTP + H2O = GDP + phosphate + H(+). In terms of biological role, promotes mitochondrial protein synthesis. May act as a fidelity factor of the translation reaction, by catalyzing a one-codon backward translocation of tRNAs on improperly translocated ribosomes. Binds to mitochondrial ribosomes in a GTP-dependent manner. This is Translation factor GUF1 homolog, mitochondrial from Caenorhabditis elegans.